We begin with the raw amino-acid sequence, 529 residues long: Bifunctional purine biosynthesis protein PurH (529 aa).

The 148-residue stretch at 1 to 148 (MQQRRPVRRA…KNHKDVAIVV (148 aa)) folds into the MGS-like domain. Lys287 is modified (N6-acetyllysine).

Belongs to the PurH family.

The enzyme catalyses (6R)-10-formyltetrahydrofolate + 5-amino-1-(5-phospho-beta-D-ribosyl)imidazole-4-carboxamide = 5-formamido-1-(5-phospho-D-ribosyl)imidazole-4-carboxamide + (6S)-5,6,7,8-tetrahydrofolate. It catalyses the reaction IMP + H2O = 5-formamido-1-(5-phospho-D-ribosyl)imidazole-4-carboxamide. It functions in the pathway purine metabolism; IMP biosynthesis via de novo pathway; 5-formamido-1-(5-phospho-D-ribosyl)imidazole-4-carboxamide from 5-amino-1-(5-phospho-D-ribosyl)imidazole-4-carboxamide (10-formyl THF route): step 1/1. It participates in purine metabolism; IMP biosynthesis via de novo pathway; IMP from 5-formamido-1-(5-phospho-D-ribosyl)imidazole-4-carboxamide: step 1/1. In Escherichia coli O8 (strain IAI1), this protein is Bifunctional purine biosynthesis protein PurH.